The following is a 280-amino-acid chain: Shikimate dehydrogenase (NADP(+)) (280 aa).

Residues 18–20 and Thr65 each bind shikimate; that span reads SRS. The active-site Proton acceptor is Lys69. Positions 90 and 105 each coordinate shikimate. Residues 131 to 135, 154 to 159, and Ile219 contribute to the NADP(+) site; these read GAGGA and NRTRAR. Shikimate is bound at residue Tyr221. Residue Gly242 participates in NADP(+) binding.

The protein belongs to the shikimate dehydrogenase family. In terms of assembly, homodimer.

The enzyme catalyses shikimate + NADP(+) = 3-dehydroshikimate + NADPH + H(+). It functions in the pathway metabolic intermediate biosynthesis; chorismate biosynthesis; chorismate from D-erythrose 4-phosphate and phosphoenolpyruvate: step 4/7. Functionally, involved in the biosynthesis of the chorismate, which leads to the biosynthesis of aromatic amino acids. Catalyzes the reversible NADPH linked reduction of 3-dehydroshikimate (DHSA) to yield shikimate (SA). This Methylocella silvestris (strain DSM 15510 / CIP 108128 / LMG 27833 / NCIMB 13906 / BL2) protein is Shikimate dehydrogenase (NADP(+)).